The sequence spans 227 residues: Germin-like protein 3-3 (227 aa).

Positions 1-26 (MECFKTTLAGVVLVVLLLQQAPVLRA) are cleaved as a signal peptide. An intrachain disulfide couples C36 to C51. The 153-residue stretch at 65–217 (SRLATGGDVN…ALRVDAGVVE (153 aa)) folds into the Cupin type-1 domain. N-linked (GlcNAc...) asparagine glycosylation is found at N78 and N81. 4 residues coordinate Mn(2+): H114, H116, E121, and H163.

The protein belongs to the germin family. Oligomer (believed to be a pentamer but probably hexamer).

It is found in the secreted. The protein resides in the extracellular space. It localises to the apoplast. In terms of biological role, may play a role in plant defense. Probably has no oxalate oxidase activity even if the active site is conserved. This is Germin-like protein 3-3 from Oryza sativa subsp. japonica (Rice).